We begin with the raw amino-acid sequence, 487 residues long: MASYSIILSVGGTSINKYPGKQHARRVAAYLPKHQGLIYLPGQQTVLSEDSDQARPFKQRRYFFYVTGVVEPDCHVTYDIAEDKLTLYVPDFDFKRTIWTGPTLGKDEASQRHVEYYSSLEGDVQRWSQGNPSSPIYILHPDQRPVTPLTVAYLYESKSLKHAMDACRVIKDEHEVQLIQRANRVSGAAHRSILANLRHFKNEAQIAGLFIDVCLSLRSKGTAYETIAGSGSNGATLHYTRNNEPLAGRQMVVLDAGAEWSCYASDVTRSFPIPSSVRGGGDWPSREAEQIYTIVQRMQEECISRVKEGALFFSIHQHAHAVALEELLKLGILRIPRGSTKADLIKAEATALFFPHGLGHHLGLEVHDVSPDSGTIPLDLAIACQNGLMSVTEHRPPCTLSAPPLASGMVITVEPGLYFNRLAINQAREERDKPDSKGRFVNFDVVERYVDVGGVRIEDDVLVTKNGNRNLTDAPKGREMLDLIYGR.

Mn(2+)-binding residues include D255, D266, E414, and E458.

The protein belongs to the peptidase M24B family. The cofactor is Mn(2+).

The enzyme catalyses Release of any N-terminal amino acid, including proline, that is linked to proline, even from a dipeptide or tripeptide.. Catalyzes the removal of a penultimate prolyl residue from the N-termini of peptides. The protein is Probable Xaa-Pro aminopeptidase MGYG_06974 of Arthroderma gypseum (strain ATCC MYA-4604 / CBS 118893) (Microsporum gypseum).